Reading from the N-terminus, the 707-residue chain is Bone morphogenetic protein 1 (707 aa).

Positions 57 to 90 are disordered; that stretch reads SGAATNISRPEKGRRTRKERRRSREKRASTSRPE. Asn-62 carries an N-linked (GlcNAc...) asparagine glycan. Basic residues predominate over residues 68-81; the sequence is KGRRTRKERRRSRE. One can recognise a Peptidase M12A domain in the interval 84–283; that stretch reads ASTSRPERVW…AQARKLYKCP (200 aa). The N-linked (GlcNAc...) asparagine glycan is linked to Asn-105. Intrachain disulfides connect Cys-126-Cys-282, Cys-146-Cys-168, Cys-148-Cys-149, and Cys-285-Cys-311. His-176 is a Zn(2+) binding site. Residue Glu-177 is part of the active site. Residues His-180 and His-186 each contribute to the Zn(2+) site. CUB domains follow at residues 285-397 and 398-509; these read CGET…YEAL and CGGE…NYFK. N-linked (GlcNAc...) asparagine glycans are attached at residues Asn-295 and Asn-326. Disulfide bonds link Cys-338–Cys-360, Cys-398–Cys-424, Cys-451–Cys-473, Cys-514–Cys-526, Cys-522–Cys-535, Cys-537–Cys-550, Cys-554–Cys-580, and Cys-607–Cys-629. The EGF-like; calcium-binding domain maps to 510-551; it reads EVDECSRPNNGGCEQRCVNTLGSYKCACDPGYELGQDKKSCE. One can recognise a CUB 3 domain in the interval 554–666; sequence CGGFLTKLNG…KGFQANFFSE (113 aa). A glycan (N-linked (GlcNAc...) asparagine) is linked at Asn-562. The tract at residues 682–707 is disordered; the sequence is RGQQNQAPKRVRPRMRLRTVKKTRPP. Basic residues predominate over residues 690-707; it reads KRVRPRMRLRTVKKTRPP.

In terms of assembly, interacts with olfml3/ont1. Requires Zn(2+) as cofactor. In terms of processing, proteolytically activated in the trans-Golgi network by furin-like/paired basic proprotein convertases, cleavage is not required for secretion.

It is found in the golgi apparatus. The protein localises to the trans-Golgi network. The protein resides in the secreted. It localises to the extracellular space. Its subcellular location is the extracellular matrix. In terms of biological role, metalloprotease involved in pattern formation in gastrula and later differentiation of developing organs. Able to cleave chordin (chrd), suggesting that it may act in dorsoventral patterning during early development by regulating the chordin (chrd) activity. The polypeptide is Bone morphogenetic protein 1 (bmp1) (Xenopus laevis (African clawed frog)).